A 147-amino-acid chain; its full sequence is Calmodulin (147 aa).

4 consecutive EF-hand domains span residues 8 to 43 (EQIA…LGLS), 44 to 79 (PSEA…QLKC), 81 to 116 (DSEQ…IGEK), and 120 to 147 (AEVD…LLSK). Residues aspartate 21, aspartate 23, serine 25, serine 27, glutamate 32, aspartate 57, aspartate 59, asparagine 61, glutamate 68, aspartate 94, asparagine 96, aspartate 98, and glutamate 105 each coordinate Ca(2+).

It belongs to the calmodulin family.

Its function is as follows. Calmodulin mediates the control of a large number of enzymes, ion channels and other proteins by Ca(2+). Among the enzymes to be stimulated by the calmodulin-Ca(2+) complex are a number of protein kinases and phosphatases. The protein is Calmodulin (CMD1) of Kluyveromyces lactis (strain ATCC 8585 / CBS 2359 / DSM 70799 / NBRC 1267 / NRRL Y-1140 / WM37) (Yeast).